Reading from the N-terminus, the 602-residue chain is Myotubularin (602 aa).

Residues 1-16 (MATSSTPKYNSNSLEN) show a composition bias toward polar residues. The interval 1–33 (MATSSTPKYNSNSLENSVRRSPGDGINHEQNDE) is disordered. Basic and acidic residues predominate over residues 17–33 (SVRRSPGDGINHEQNDE). The region spanning 28-96 (HEQNDEISRL…GVIARIEKMG (69 aa)) is the GRAM domain. In terms of domain architecture, Myotubularin phosphatase spans 162 to 537 (GWAVYDAMTE…RHLELWVNYY (376 aa)). Residues Asn287, Asn312, and Ile313 each contribute to the a 1,2-diacyl-sn-glycero-3-phospho-(1D-myo-inositol-3,5-bisphosphate) site. The a 1,2-diacyl-sn-glycero-3-phospho-(1D-myo-inositol-3-phosphate) site is built by Asn287, Asn312, and Ile313. The active-site Phosphocysteine intermediate is the Cys374. A 1,2-diacyl-sn-glycero-3-phospho-(1D-myo-inositol-3,5-bisphosphate)-binding residues include Ser375, Asp376, Gly377, Trp378, Asp379, Arg380, Lys416, and Arg420. A 1,2-diacyl-sn-glycero-3-phospho-(1D-myo-inositol-3-phosphate) is bound by residues Ser375, Asp376, Gly377, Trp378, Asp379, and Arg380. Arg420 serves as a coordination point for a 1,2-diacyl-sn-glycero-3-phospho-(1D-myo-inositol-3-phosphate). Residues 577–602 (NSPKINRSTTSPSSPSQMMPQVQTPF) form a disordered region. The segment covering 584–602 (STTSPSSPSQMMPQVQTPF) has biased composition (low complexity).

Belongs to the protein-tyrosine phosphatase family. Non-receptor class myotubularin subfamily.

Its subcellular location is the cytoplasm. It localises to the cell membrane. The protein resides in the cell projection. It is found in the filopodium. The protein localises to the ruffle. Its subcellular location is the late endosome. It localises to the myofibril. The protein resides in the sarcomere. It catalyses the reaction a 1,2-diacyl-sn-glycero-3-phospho-(1D-myo-inositol-3-phosphate) + H2O = a 1,2-diacyl-sn-glycero-3-phospho-(1D-myo-inositol) + phosphate. It carries out the reaction a 1,2-diacyl-sn-glycero-3-phospho-(1D-myo-inositol-3,5-bisphosphate) + H2O = a 1,2-diacyl-sn-glycero-3-phospho-(1D-myo-inositol-5-phosphate) + phosphate. The enzyme catalyses 1,2-dioctanoyl-sn-glycero-3-phospho-(1-D-myo-inositol-3-phosphate) + H2O = 1,2-dioctanoyl-sn-glycero-3-phospho-(1D-myo-inositol) + phosphate. The catalysed reaction is 1,2-dioctanoyl-sn-glycero-3-phospho-(1D-myo-inositol-3,5-bisphosphate) + H2O = 1,2-dioctanoyl-sn-glycero-3-phospho-(1D-myo-inositol-5-phosphate) + phosphate. It catalyses the reaction 1,2-dihexadecanoyl-sn-glycero-3-phospho-(1D-myo-inositol-3,5-phosphate) + H2O = 1,2-dihexadecanoyl-sn-glycero-3-phospho-(1D-myo-inositol-5-phosphate) + phosphate. Its function is as follows. Lipid phosphatase which dephosphorylates phosphatidylinositol 3-monophosphate (PI3P) and phosphatidylinositol 3,5-bisphosphate (PI(3,5)P2). In Xenopus laevis (African clawed frog), this protein is Myotubularin (mtm1).